A 405-amino-acid polypeptide reads, in one-letter code: Sarcosine oxidase subunit beta (405 aa).

7 residues coordinate FAD: glycine 31, histidine 32, glutamate 53, asparagine 61, methionine 62, threonine 66, and isoleucine 68. Histidine 173 carries the post-translational modification Tele-8alpha-FMN histidine. 4 residues coordinate FAD: valine 197, glycine 354, glycine 357, and lysine 359.

It belongs to the SoxB family. Heterotetramer composed of subunits alpha (SoxA), beta (SoxB), gamma (SoxG) and delta (SoxD). It depends on FAD as a cofactor. Requires FMN as cofactor.

The protein resides in the cytoplasm. It catalyses the reaction sarcosine + (6S)-5,6,7,8-tetrahydrofolate + O2 = (6R)-5,10-methylene-5,6,7,8-tetrahydrofolate + glycine + H2O2. The catalysed reaction is sarcosine + O2 + H2O = formaldehyde + glycine + H2O2. In the presence of tetrahydrofolate, catalyzes the oxidative demethylation of sarcosine to yield glycine, 5,10-methylenetetrahydrofolate and hydrogen peroxide. In the absence of tetrahydrofolate, catalyzes the oxidative demethylation of sarcosine to yield glycine, formaldehyde and hydrogen peroxide. In Arthrobacter sp, this protein is Sarcosine oxidase subunit beta (soxB).